Consider the following 695-residue polypeptide: Centrosomal protein of 89 kDa (695 aa).

Disordered regions lie at residues 24–54 (LIPAATIAPRPAVPRTPPPRSPNPSPERPRS), 66–147 (TGRT…GDED), and 167–272 (AVPL…SEVL). The segment covering 34-49 (PAVPRTPPPRSPNPSP) has biased composition (pro residues). Acidic residues-rich tracts occupy residues 124 to 146 (DEDDDEDDEGNDIDELEGLEGDE) and 178 to 189 (DSDVDEETEDSA). Residues 209 to 226 (GQTQPSSLPQPRSVSRRS) are compositionally biased toward polar residues. Residues 251-271 (TNKESPVRVNERDRSSEDSEV) are compositionally biased toward basic and acidic residues. 2 coiled-coil regions span residues 276–368 (LEVQ…RYQA) and 406–632 (AYED…LEKE).

The protein localises to the cytoplasm. It localises to the cytosol. Its subcellular location is the cytoskeleton. It is found in the microtubule organizing center. The protein resides in the centrosome. The protein localises to the spindle pole. It localises to the centriole. Its subcellular location is the mitochondrion intermembrane space. In terms of biological role, required for ciliogenesis. Also plays a role in mitochondrial metabolism where it may modulate complex IV activity. This Danio rerio (Zebrafish) protein is Centrosomal protein of 89 kDa (cep89).